A 231-amino-acid chain; its full sequence is Cytidylate kinase 1 (231 aa).

7 to 15 lines the ATP pocket; that stretch reads GPSGAGKGT.

This sequence belongs to the cytidylate kinase family. Type 1 subfamily.

Its subcellular location is the cytoplasm. It catalyses the reaction CMP + ATP = CDP + ADP. The catalysed reaction is dCMP + ATP = dCDP + ADP. The polypeptide is Cytidylate kinase 1 (Haemophilus influenzae (strain ATCC 51907 / DSM 11121 / KW20 / Rd)).